The sequence spans 337 residues: Glyceraldehyde-3-phosphate dehydrogenase (337 aa).

NAD(+) contacts are provided by residues 17-18, Asp-39, Lys-83, and Ser-125; that span reads RI. Residues 156–158, Thr-187, Arg-202, 215–216, and Arg-238 contribute to the D-glyceraldehyde 3-phosphate site; these read SCT and TG. The active-site Nucleophile is the Cys-157. Asn-319 contributes to the NAD(+) binding site.

Belongs to the glyceraldehyde-3-phosphate dehydrogenase family. In terms of assembly, homotetramer.

Its subcellular location is the cytoplasm. The catalysed reaction is D-glyceraldehyde 3-phosphate + phosphate + NAD(+) = (2R)-3-phospho-glyceroyl phosphate + NADH + H(+). It participates in carbohydrate degradation; glycolysis; pyruvate from D-glyceraldehyde 3-phosphate: step 1/5. Functionally, catalyzes the oxidative phosphorylation of glyceraldehyde 3-phosphate (G3P) to 1,3-bisphosphoglycerate (BPG) using the cofactor NAD. The first reaction step involves the formation of a hemiacetal intermediate between G3P and a cysteine residue, and this hemiacetal intermediate is then oxidized to a thioester, with concomitant reduction of NAD to NADH. The reduced NADH is then exchanged with the second NAD, and the thioester is attacked by a nucleophilic inorganic phosphate to produce BPG. The sequence is that of Glyceraldehyde-3-phosphate dehydrogenase (gapA) from Mycoplasma genitalium (strain ATCC 33530 / DSM 19775 / NCTC 10195 / G37) (Mycoplasmoides genitalium).